Here is a 172-residue protein sequence, read N- to C-terminus: MPEELTPTPETAVVEAGPVSRWLSENGFENTALERDHLGVEIVQVDREVLLPIAAALFAYGFNYLQCQGGYDLGPGQDLVSFYHLTKVSDDASQPQEVRVKVFLPRHDPKVPSVFWIWKGADWQERETFDMYGIQFEGHPNLKRILMPEDWVGWPLRKDYISPDFYELQDAY.

The protein belongs to the complex I 30 kDa subunit family. In terms of assembly, NDH-1 can be composed of about 15 different subunits; different subcomplexes with different compositions have been identified which probably have different functions.

Its subcellular location is the cellular thylakoid membrane. The enzyme catalyses a plastoquinone + NADH + (n+1) H(+)(in) = a plastoquinol + NAD(+) + n H(+)(out). It catalyses the reaction a plastoquinone + NADPH + (n+1) H(+)(in) = a plastoquinol + NADP(+) + n H(+)(out). Functionally, NDH-1 shuttles electrons from an unknown electron donor, via FMN and iron-sulfur (Fe-S) centers, to quinones in the respiratory and/or the photosynthetic chain. The immediate electron acceptor for the enzyme in this species is believed to be plastoquinone. Couples the redox reaction to proton translocation, and thus conserves the redox energy in a proton gradient. Cyanobacterial NDH-1 also plays a role in inorganic carbon-concentration. This Synechococcus elongatus (strain ATCC 33912 / PCC 7942 / FACHB-805) (Anacystis nidulans R2) protein is NAD(P)H-quinone oxidoreductase subunit J.